We begin with the raw amino-acid sequence, 28 residues long: Alpha-(1-6)-linked fucose-specific lectin (28 aa).

Homohexamer. In terms of tissue distribution, expressed by mycelium-forming spores.

The protein resides in the secreted. Its function is as follows. Alpha-(1-6)-linked L-fucose specific lectin. The protein is Alpha-(1-6)-linked fucose-specific lectin of Rhizopus stolonifer (Rhizopus nigricans).